Reading from the N-terminus, the 251-residue chain is MDSENFKQHLKKLYSVNNGKVKITNEIVKFTQNHSEPLHQVQKDLINYTNTNFESNSYMLTDGNQNQFFTLLLKVLNAKKAIDVGVYTGLSSLSFALSMPDDGKVTSIDCVRDYEECCHLHWKKANVDHKINLVIDNAKNHLQKLIDNGESGTFDFIFIDADKDSYDAYYELSLKLIRKGGIIAFDNILFFGATLVDHDSKKPEDQIFLGCPSFQRMVDALKLLNEKIANDERVIKTMLPLSDGITLVTKK.

Residues Thr61, Asp83, 85–86 (GV), Ser91, Asp109, and Ala138 each bind S-adenosyl-L-methionine. Asp160 provides a ligand contact to a divalent metal cation. Asp162 contributes to the S-adenosyl-L-methionine binding site. A divalent metal cation contacts are provided by Asp186 and Asn187.

This sequence belongs to the class I-like SAM-binding methyltransferase superfamily. Cation-dependent O-methyltransferase family. CCoAMT subfamily.

It catalyses the reaction (E)-caffeoyl-CoA + S-adenosyl-L-methionine = (E)-feruloyl-CoA + S-adenosyl-L-homocysteine + H(+). The polypeptide is Probable caffeoyl-CoA O-methyltransferase 3 (omt1) (Dictyostelium discoideum (Social amoeba)).